We begin with the raw amino-acid sequence, 480 residues long: tRNA (guanine(37)-N(1))-methyltransferase (480 aa).

S-adenosyl-L-methionine contacts are provided by residues His-244, 292–293 (DL), 321–322 (DG), and Asn-342.

Belongs to the class I-like SAM-binding methyltransferase superfamily. TRM5/TYW2 family. As to quaternary structure, monomer.

It localises to the mitochondrion matrix. It is found in the nucleus. The protein resides in the cytoplasm. The catalysed reaction is guanosine(37) in tRNA + S-adenosyl-L-methionine = N(1)-methylguanosine(37) in tRNA + S-adenosyl-L-homocysteine + H(+). Functionally, specifically methylates the N1 position of guanosine-37 in various cytoplasmic and mitochondrial tRNAs. Methylation is not dependent on the nature of the nucleoside 5' of the target nucleoside. This is the first step in the biosynthesis of wybutosine (yW), a modified base adjacent to the anticodon of tRNAs and required for accurate decoding. This Thalassiosira pseudonana (Marine diatom) protein is tRNA (guanine(37)-N(1))-methyltransferase.